Here is a 432-residue protein sequence, read N- to C-terminus: Tyrosine-protein phosphatase non-receptor type 1 (432 aa).

At M1 the chain carries N-acetylmethionine. The Tyrosine-protein phosphatase domain occupies M3 to G277. Position 20 is a phosphotyrosine (Y20). S50 is modified (phosphoserine; by CLK1, CLK2 and PKB/AKT1 or PKB/AKT2). Y66 carries the post-translational modification Phosphotyrosine; by EGFR. Substrate-binding positions include D181 and C215–R221. Catalysis depends on C215, which acts as the Phosphocysteine intermediate. C215 is subject to Cysteine persulfide. Position 215 is an S-nitrosocysteine; in reversibly inhibited form (C215). Phosphoserine; by CLK1 and CLK2 occurs at positions 242 and 243. Q262 is a binding site for substrate. Disordered stretches follow at residues E297–G322 and S335–K399. A phosphoserine mark is found at S335, S362, and S364. The span at S354–S364 shows a compositional bias: low complexity. Residue T367 is modified to Phosphothreonine.

This sequence belongs to the protein-tyrosine phosphatase family. Non-receptor class 1 subfamily. Interacts with EPHA3 (phosphorylated); dephosphorylates EPHA3 and may regulate its trafficking and function. Interacts with MET. Interacts with NCK1. In terms of processing, ser-50 is the major site of phosphorylation as compared to Ser-242 and Ser-243. Activated by phosphorylation at Ser-50. Post-translationally, S-nitrosylation of Cys-215 inactivates the enzyme activity. Sulfhydration at Cys-215 following endoplasmic reticulum stress inactivates the enzyme activity, promoting EIF2AK3/PERK activity. Most abundant in testis. Also found in kidney, spleen, muscle, liver, heart and brain.

It localises to the endoplasmic reticulum membrane. It carries out the reaction O-phospho-L-tyrosyl-[protein] + H2O = L-tyrosyl-[protein] + phosphate. In terms of biological role, tyrosine-protein phosphatase which acts as a regulator of endoplasmic reticulum unfolded protein response. Mediates dephosphorylation of EIF2AK3/PERK; inactivating the protein kinase activity of EIF2AK3/PERK. May play an important role in CKII- and p60c-src-induced signal transduction cascades. May regulate the EFNA5-EPHA3 signaling pathway which modulates cell reorganization and cell-cell repulsion. May also regulate the hepatocyte growth factor receptor signaling pathway through dephosphorylation of MET. The sequence is that of Tyrosine-protein phosphatase non-receptor type 1 (Ptpn1) from Mus musculus (Mouse).